Consider the following 164-residue polypeptide: Thiol peroxidase (164 aa).

Positions 18–163 constitute a Thioredoxin domain; it reads INEGDFAPDF…FDAALAAYKN (146 aa). The active-site Cysteine sulfenic acid (-SOH) intermediate is the Cys-60. Cys-60 and Cys-93 are joined by a disulfide.

The protein belongs to the peroxiredoxin family. Tpx subfamily. As to quaternary structure, homodimer.

The enzyme catalyses a hydroperoxide + [thioredoxin]-dithiol = an alcohol + [thioredoxin]-disulfide + H2O. In terms of biological role, thiol-specific peroxidase that catalyzes the reduction of hydrogen peroxide and organic hydroperoxides to water and alcohols, respectively. Plays a role in cell protection against oxidative stress by detoxifying peroxides. The sequence is that of Thiol peroxidase from Staphylococcus aureus (strain COL).